The following is a 444-amino-acid chain: Tol-Pal system protein TolB (444 aa).

Positions M1–A18 are cleaved as a signal peptide.

Belongs to the TolB family. As to quaternary structure, the Tol-Pal system is composed of five core proteins: the inner membrane proteins TolA, TolQ and TolR, the periplasmic protein TolB and the outer membrane protein Pal. They form a network linking the inner and outer membranes and the peptidoglycan layer.

The protein resides in the periplasm. Functionally, part of the Tol-Pal system, which plays a role in outer membrane invagination during cell division and is important for maintaining outer membrane integrity. In Rickettsia canadensis (strain McKiel), this protein is Tol-Pal system protein TolB.